Here is a 256-residue protein sequence, read N- to C-terminus: Major prion protein (256 aa).

The signal sequence occupies residues Met-1–Cys-24. Residues Lys-25–Ala-233 are interaction with GRB2, ERI3 and SYN1. A disordered region spans residues Pro-28–Thr-110. Tandem repeats lie at residues Pro-54–Gln-62, Pro-63–Gln-70, Pro-71–Gln-78, Pro-79–Gln-86, and Pro-87–Gln-95. Residues Pro-54–Gln-95 are 5 X 8 AA tandem repeats of P-H-G-G-G-W-G-Q. The segment covering Gln-55 to Gly-97 has biased composition (gly residues). The Cu(2+) site is built by His-64, Gly-65, Gly-66, His-72, Gly-73, Gly-74, His-80, Gly-81, Gly-82, His-88, Gly-90, and Gly-91. An intrachain disulfide couples Cys-182 to Cys-217. N-linked (GlcNAc...) asparagine glycans are attached at residues Asn-184 and Asn-200. The GPI-anchor amidated alanine moiety is linked to residue Ala-233. Residues Ser-234–Gly-256 constitute a propeptide, removed in mature form.

This sequence belongs to the prion family. In terms of assembly, monomer and homodimer. Has a tendency to aggregate into amyloid fibrils containing a cross-beta spine, formed by a steric zipper of superposed beta-strands. Soluble oligomers may represent an intermediate stage on the path to fibril formation. Copper binding may promote oligomerization. Interacts with GRB2, APP, ERI3/PRNPIP and SYN1. Mislocalized cytosolically exposed PrP interacts with MGRN1; this interaction alters MGRN1 subcellular location and causes lysosomal enlargement. Interacts with KIAA1191.

The protein resides in the cell membrane. The protein localises to the golgi apparatus. Its primary physiological function is unclear. Has cytoprotective activity against internal or environmental stresses. May play a role in neuronal development and synaptic plasticity. May be required for neuronal myelin sheath maintenance. May play a role in iron uptake and iron homeostasis. Soluble oligomers are toxic to cultured neuroblastoma cells and induce apoptosis (in vitro). Association with GPC1 (via its heparan sulfate chains) targets PRNP to lipid rafts. Also provides Cu(2+) or Zn(2+) for the ascorbate-mediated GPC1 deaminase degradation of its heparan sulfate side chains. The sequence is that of Major prion protein (PRNP) from Cervus elaphus (Red deer).